Reading from the N-terminus, the 720-residue chain is DNA ligase (720 aa).

Residues Asp-60–Asp-64, Ser-109–Leu-110, and Glu-140 each bind NAD(+). The active-site N6-AMP-lysine intermediate is Lys-142. NAD(+) is bound by residues Arg-163 and Glu-201. A disordered region spans residues Gly-220–Asp-239. Residues Lys-320 and Lys-344 each coordinate NAD(+). Residues Cys-438, Cys-441, Cys-456, and Cys-461 each coordinate Zn(2+). Residues Lys-619 to Asp-709 form the BRCT domain.

Belongs to the NAD-dependent DNA ligase family. LigA subfamily. It depends on Mn(2+) as a cofactor. Requires Mg(2+) as cofactor.

The catalysed reaction is NAD(+) + (deoxyribonucleotide)n-3'-hydroxyl + 5'-phospho-(deoxyribonucleotide)m = (deoxyribonucleotide)n+m + AMP + beta-nicotinamide D-nucleotide.. Its function is as follows. DNA ligase that catalyzes the formation of phosphodiester linkages between 5'-phosphoryl and 3'-hydroxyl groups in double-stranded DNA using NAD as a coenzyme and as the energy source for the reaction. It is essential for DNA replication and repair of damaged DNA. This chain is DNA ligase, found in Aquifex aeolicus (strain VF5).